The primary structure comprises 129 residues: Follitropin subunit beta (129 aa).

The first 19 residues, 1 to 19 (MKSVQFCFLFCCWRAICCR), serve as a signal peptide directing secretion. 6 cysteine pairs are disulfide-bonded: cysteine 21-cysteine 69, cysteine 35-cysteine 84, cysteine 38-cysteine 122, cysteine 46-cysteine 100, cysteine 50-cysteine 102, and cysteine 105-cysteine 112. N-linked (GlcNAc...) asparagine glycans are attached at residues asparagine 25 and asparagine 42.

Belongs to the glycoprotein hormones subunit beta family. As to quaternary structure, heterodimer. The active follitropin is a heterodimer composed of an alpha chain/CGA shared with other hormones and a unique beta chain/FSHB shown here.

The protein resides in the secreted. Functionally, together with the alpha chain CGA constitutes follitropin, the follicle-stimulating hormone, and provides its biological specificity to the hormone heterodimer. Binds FSHR, a G protein-coupled receptor, on target cells to activate downstream signaling pathways. Follitropin is involved in follicle development and spermatogenesis in reproductive organs. The protein is Follitropin subunit beta (FSHB) of Ovis aries (Sheep).